The following is a 447-amino-acid chain: NADP-specific glutamate dehydrogenase (447 aa).

Positions 92, 113, and 116 each coordinate substrate. K128 serves as the catalytic Proton donor. G167 is a binding site for substrate. NADP(+) contacts are provided by T211 and N242. S380 provides a ligand contact to substrate.

Belongs to the Glu/Leu/Phe/Val dehydrogenases family. As to quaternary structure, homohexamer.

The enzyme catalyses L-glutamate + NADP(+) + H2O = 2-oxoglutarate + NH4(+) + NADPH + H(+). Its function is as follows. Catalyzes the reversible oxidative deamination of glutamate to alpha-ketoglutarate and ammonia. This is NADP-specific glutamate dehydrogenase (gdhA) from Salmonella typhimurium (strain LT2 / SGSC1412 / ATCC 700720).